The following is a 360-amino-acid chain: Probable dual-specificity RNA methyltransferase RlmN (360 aa).

Glu-91 functions as the Proton acceptor in the catalytic mechanism. In terms of domain architecture, Radical SAM core spans 97–335 (QHYGQSVCVT…CVVRQEHGTD (239 aa)). Residues Cys-104 and Cys-340 are joined by a disulfide bond. Cys-111, Cys-115, and Cys-118 together coordinate [4Fe-4S] cluster. Residues 163–164 (GE), Ser-195, 218–220 (SLH), and Asn-296 each bind S-adenosyl-L-methionine. Cys-340 functions as the S-methylcysteine intermediate in the catalytic mechanism.

This sequence belongs to the radical SAM superfamily. RlmN family. [4Fe-4S] cluster serves as cofactor.

The protein resides in the cytoplasm. The enzyme catalyses adenosine(2503) in 23S rRNA + 2 reduced [2Fe-2S]-[ferredoxin] + 2 S-adenosyl-L-methionine = 2-methyladenosine(2503) in 23S rRNA + 5'-deoxyadenosine + L-methionine + 2 oxidized [2Fe-2S]-[ferredoxin] + S-adenosyl-L-homocysteine. It catalyses the reaction adenosine(37) in tRNA + 2 reduced [2Fe-2S]-[ferredoxin] + 2 S-adenosyl-L-methionine = 2-methyladenosine(37) in tRNA + 5'-deoxyadenosine + L-methionine + 2 oxidized [2Fe-2S]-[ferredoxin] + S-adenosyl-L-homocysteine. Its function is as follows. Specifically methylates position 2 of adenine 2503 in 23S rRNA and position 2 of adenine 37 in tRNAs. The sequence is that of Probable dual-specificity RNA methyltransferase RlmN from Streptococcus equi subsp. equi (strain 4047).